Here is a 511-residue protein sequence, read N- to C-terminus: Probable DNA ligase (511 aa).

E209 is an ATP binding site. The N6-AMP-lysine intermediate role is filled by K211. Positions 216, 231, 260, 299, 371, and 377 each coordinate ATP.

The protein belongs to the ATP-dependent DNA ligase family. Mg(2+) is required as a cofactor.

The enzyme catalyses ATP + (deoxyribonucleotide)n-3'-hydroxyl + 5'-phospho-(deoxyribonucleotide)m = (deoxyribonucleotide)n+m + AMP + diphosphate.. Its function is as follows. DNA ligase that seals nicks in double-stranded DNA during DNA replication, DNA recombination and DNA repair. This chain is Probable DNA ligase, found in Mycolicibacterium gilvum (strain PYR-GCK) (Mycobacterium gilvum (strain PYR-GCK)).